Consider the following 696-residue polypeptide: DEAD-box ATP-dependent RNA helicase 7 (696 aa).

The segment at 1 to 116 is disordered; that stretch reads MPSLPVAAAE…GDEDPADPNA (116 aa). The stretch at 16–97 forms a coiled coil; sequence ESASKKSKRK…KVVVEEEEED (82 aa). A compositionally biased stretch (basic and acidic residues) spans 27-38; it reads KAAEVEVEASSR. The span at 39–49 shows a compositional bias: basic residues; that stretch reads KKEKKEKKRKA. Residues 67–77 show a composition bias toward low complexity; that stretch reads STSSDEPAPAA. The span at 92–112 shows a compositional bias: acidic residues; it reads EEEEEDDDEGELTASGDEDPA. The short motif at 115–143 is the Q motif element; the sequence is NALANFRISESLREKLKSKGIKALFPIQA. The Helicase ATP-binding domain occupies 146 to 328; that stretch reads FDLVLDGHDL…LRFLKSGKKT (183 aa). An ATP-binding site is contributed by 159-166; that stretch reads ARTGQGKT. A DEAD box motif is present at residues 274–277; it reads DEAD. Positions 357–500 constitute a Helicase C-terminal domain; that stretch reads QVIPDIIRCY…ISAPQPTDVA (144 aa). The tract at residues 641–696 is disordered; the sequence is LPPLQEREQSGGSRGGGRFGNRRFSGGGGGRGGGGRGFGGGRGRGGGGGNRFNKRY. The segment covering 652–690 has biased composition (gly residues); it reads GSRGGGRFGNRRFSGGGGGRGGGGRGFGGGRGRGGGGGN.

Belongs to the DEAD box helicase family. DDX21/DDX50 subfamily.

It localises to the nucleus. The catalysed reaction is ATP + H2O = ADP + phosphate + H(+). The sequence is that of DEAD-box ATP-dependent RNA helicase 7 from Oryza sativa subsp. japonica (Rice).